Here is a 508-residue protein sequence, read N- to C-terminus: U4/U6 small nuclear ribonucleoprotein Prp31 (508 aa).

The disordered stretch occupies residues methionine 1 to isoleucine 45. Residues leucine 7 to glutamate 32 show a composition bias toward acidic residues. Coiled-coil stretches lie at residues glutamate 96 to lysine 131 and aspartate 192 to isoleucine 226. One can recognise a Nop domain in the interval isoleucine 226–glutamate 344. 2 disordered regions span residues proline 345–arginine 368 and glutamine 442–serine 461. The short motif at arginine 362 to glutamate 375 is the Nuclear localization signal (NLS) element.

The protein belongs to the PRP31 family. Identified in the spliceosome B complex. Component of the U4/U6-U5 tri-snRNP complex. Component of some MLL1/MLL complex.

It localises to the nucleus. It is found in the nucleus speckle. The protein localises to the cajal body. Its function is as follows. Involved in pre-mRNA splicing as component of the spliceosome. Required for the assembly of the U4/U5/U6 tri-snRNP complex, one of the building blocks of the spliceosome. The sequence is that of U4/U6 small nuclear ribonucleoprotein Prp31 (prpf31) from Danio rerio (Zebrafish).